The chain runs to 441 residues: Serine--tRNA ligase (441 aa).

250–252 (TSE) serves as a coordination point for L-serine. Residues 281 to 283 (RRE) and Val297 each bind ATP. Glu304 lines the L-serine pocket. 368–371 (EIVS) lines the ATP pocket. Thr402 lines the L-serine pocket.

Belongs to the class-II aminoacyl-tRNA synthetase family. Type-1 seryl-tRNA synthetase subfamily. As to quaternary structure, homodimer. The tRNA molecule binds across the dimer.

It is found in the cytoplasm. The catalysed reaction is tRNA(Ser) + L-serine + ATP = L-seryl-tRNA(Ser) + AMP + diphosphate + H(+). It carries out the reaction tRNA(Sec) + L-serine + ATP = L-seryl-tRNA(Sec) + AMP + diphosphate + H(+). Its pathway is aminoacyl-tRNA biosynthesis; selenocysteinyl-tRNA(Sec) biosynthesis; L-seryl-tRNA(Sec) from L-serine and tRNA(Sec): step 1/1. Its function is as follows. Catalyzes the attachment of serine to tRNA(Ser). Is also able to aminoacylate tRNA(Sec) with serine, to form the misacylated tRNA L-seryl-tRNA(Sec), which will be further converted into selenocysteinyl-tRNA(Sec). The chain is Serine--tRNA ligase from Thermoplasma volcanium (strain ATCC 51530 / DSM 4299 / JCM 9571 / NBRC 15438 / GSS1).